The sequence spans 75 residues: DNA-directed RNA polymerase subunit omega (75 aa).

This sequence belongs to the RNA polymerase subunit omega family. In terms of assembly, in cyanobacteria the RNAP catalytic core is composed of 2 alpha, 1 beta, 1 beta', 1 gamma and 1 omega subunit. When a sigma factor is associated with the core the holoenzyme is formed, which can initiate transcription.

It carries out the reaction RNA(n) + a ribonucleoside 5'-triphosphate = RNA(n+1) + diphosphate. Promotes RNA polymerase assembly. Latches the N- and C-terminal regions of the beta' subunit thereby facilitating its interaction with the beta and alpha subunits. The polypeptide is DNA-directed RNA polymerase subunit omega (Gloeothece citriformis (strain PCC 7424) (Cyanothece sp. (strain PCC 7424))).